Reading from the N-terminus, the 466-residue chain is Adenosylhomocysteinase (466 aa).

Positions 57, 132, and 192 each coordinate substrate. NAD(+) is bound at residue 193–195 (TTT). Residues Lys-222 and Asp-226 each contribute to the substrate site. Residues Asn-227, 256–261 (GYGDVG), Glu-279, Asn-314, 335–337 (IGH), and Asn-380 contribute to the NAD(+) site.

Belongs to the adenosylhomocysteinase family. It depends on NAD(+) as a cofactor.

It localises to the cytoplasm. It carries out the reaction S-adenosyl-L-homocysteine + H2O = L-homocysteine + adenosine. Its pathway is amino-acid biosynthesis; L-homocysteine biosynthesis; L-homocysteine from S-adenosyl-L-homocysteine: step 1/1. May play a key role in the regulation of the intracellular concentration of adenosylhomocysteine. This Brucella anthropi (strain ATCC 49188 / DSM 6882 / CCUG 24695 / JCM 21032 / LMG 3331 / NBRC 15819 / NCTC 12168 / Alc 37) (Ochrobactrum anthropi) protein is Adenosylhomocysteinase.